A 146-amino-acid polypeptide reads, in one-letter code: Cytidine deaminase (146 aa).

The 128-residue stretch at 13–140 (ECVQQLLVCS…ELLPSSFGPE (128 aa)) folds into the CMP/dCMP-type deaminase domain. 54 to 60 (NIENACY) provides a ligand contact to substrate. A Zn(2+)-binding site is contributed by cysteine 65. The Proton donor role is filled by glutamate 67. The Zn(2+) site is built by cysteine 99 and cysteine 102.

The protein belongs to the cytidine and deoxycytidylate deaminase family. In terms of assembly, homotetramer. The cofactor is Zn(2+). As to expression, highly expressed in granulocytes while expression is very low in fibroblasts, chondrocytes, monocytes, and T- as well as B-cell lines.

The enzyme catalyses cytidine + H2O + H(+) = uridine + NH4(+). It catalyses the reaction 2'-deoxycytidine + H2O + H(+) = 2'-deoxyuridine + NH4(+). Its function is as follows. This enzyme scavenges exogenous and endogenous cytidine and 2'-deoxycytidine for UMP synthesis. In Homo sapiens (Human), this protein is Cytidine deaminase.